Here is an 887-residue protein sequence, read N- to C-terminus: MINTSPLLNYVSSHHDIKAINQWRTDVEKQLQDSYENGQSIREIIKARSDLVDEALVFLWKHAELDQSKLGLFAVGGYGRREMLPYSDVDIMILSEDEISEENEKRISTFISSLWDVGNFKPGISVRTIQSCVEQAATDLTVATTLIEARLITGNTQLAKWPRRIVSQTWTDKTFYDAKMAEQAKRYHQHNNTESNLEPDIKNAPGGIRDINQIGWIAKRHFRVNRIYDLVHLGFISEFELAVLEEAESFLWEIRHHLHRLAKRDENRLLFDHQREIAAKFGYVRQEGQPVNYGVEQFMKRYYRTAQQVSTLNEMLLAYFSESVITPRLPNYERKIEVVNDHFKIVDNKLAVQHHKIFAEHPSAILELFYILANRPDIEGIRARTLRLLILAAKRINQSYRDNPEHQALFMSIIRSPYRLYDTLVAMKRYGVLGNYIPAFGQIMGLMQYDLFHIYTVDAHTLLLLRNLNRFREPEFAKEFPVVSSVFQRLARQDIVFIAALFHDIAKGRGGDHSELGAEDAIEFGRAHGFTERECKLIAWLIQNHLLMSLTAQKKDISDPDVVKDFAEKLGDMEHLDYLYTLTVADINATNPKLWNTWRASLMRQLYTHARDVIRTGLGRPVDYQMLIEDTKFAASELLVNNFALADVEKVWQELGDEYFIKESADEIAWHTQAILKHGDNPEPLVLLRAHRKAAQDAVQIFIYTRDQPNLFATTVAVLDRMNLDVQDAKIITASTAFSLDTYVVLDRFGTLLTDPEREETVKNALVKALSQPDQYPGLMQRRIPRQLRHFDIENTVDVTLNEALQQNMVEISTLDHPGLLARVGGLFMMQGLDIHSARIATLGERAEDIFFVTKKDGKPLNNEEVKLFSEKLKAALDEASNQICQH.

Positions 1–337 (MINTSPLLNY…RLPNYERKIE (337 aa)) are uridylyltransferase. A uridylyl-removing region spans residues 339-699 (VNDHFKIVDN…AHRKAAQDAV (361 aa)). An HD domain is found at 457-579 (VDAHTLLLLR…LGDMEHLDYL (123 aa)). 2 consecutive ACT domains span residues 700–782 (QIFI…LMQR) and 809–887 (MVEI…ICQH).

The protein belongs to the GlnD family. It depends on Mg(2+) as a cofactor.

The enzyme catalyses [protein-PII]-L-tyrosine + UTP = [protein-PII]-uridylyl-L-tyrosine + diphosphate. It catalyses the reaction [protein-PII]-uridylyl-L-tyrosine + H2O = [protein-PII]-L-tyrosine + UMP + H(+). Uridylyltransferase (UTase) activity is inhibited by glutamine, while glutamine activates uridylyl-removing (UR) activity. Functionally, modifies, by uridylylation and deuridylylation, the PII regulatory proteins (GlnB and homologs), in response to the nitrogen status of the cell that GlnD senses through the glutamine level. Under low glutamine levels, catalyzes the conversion of the PII proteins and UTP to PII-UMP and PPi, while under higher glutamine levels, GlnD hydrolyzes PII-UMP to PII and UMP (deuridylylation). Thus, controls uridylylation state and activity of the PII proteins, and plays an important role in the regulation of nitrogen assimilation and metabolism. The protein is Bifunctional uridylyltransferase/uridylyl-removing enzyme of Acinetobacter baumannii (strain AB307-0294).